A 507-amino-acid polypeptide reads, in one-letter code: MTLRKTAGYLWNPISLIGFLLAVVATGLIIAFIAMEMITGIDHPYIGLLVYFAFPGMLILGLILVPIGAWRVRNQRRTEVPEEVPPYPRVDFNDPHKRRLFIFFVLASVIFVLIVSVASILGFEFTESTTFCGELCHVVMEPEHKAWQGSPHARVKCVECHVGPGAEWYVKAKLSGLRQVWAVLTHSYHFPIATPIENLRPARDTCEQCHWPEKFYSGRQRVFYHYAPNKENTPREINMLIKIGGTPKSPHAMGIHWHIGTEVTYIARDRKRLDIPYVAVKQKDGSIVEYMDTEKPLTREEIAKAEKRRMDCIDCHNRPTHIYRSPAREMDEHIVSGQIDAGLPYIKKVAVEILEQPYKSKEEAHAAIEAKLPEYYAKNFPEVAKVKAAAINQAVAHVKDIYSRNFFPRMKVTWSTYPNHIGHFYTPGCFRCHDGKHKTSTGKIISKDCNMCHEMIGQKGENIPEGKVVKEFVHPADIGDALYNVNCSDCHMAAAEDSAGGEGPGKH.

3 helical membrane-spanning segments follow: residues 14–34 (ISLI…AFIA), 45–65 (YIGL…LILV), and 100–120 (LFIF…VASI). Residues cysteine 132, cysteine 136, methionine 140, histidine 152, cysteine 157, cysteine 160, histidine 161, aspartate 400, cysteine 449, cysteine 452, histidine 453, cysteine 487, cysteine 490, histidine 491, and glutamate 496 each contribute to the heme site.

Belongs to the NapC/NirT/NrfH family. In terms of processing, binds 4 heme c groups covalently per subunit.

The protein localises to the cell inner membrane. In terms of biological role, redox protein involved in a high-potential metal respiratory pathway. Is required only for electron transfer to terminal extracellular electron acceptors with redox potentials higher than -0.1 V. ImcH likely transfers electrons from the quinone pool to a periplasmic acceptor. The chain is Cytochrome c-type protein ImcH from Geobacter sulfurreducens (strain ATCC 51573 / DSM 12127 / PCA).